Reading from the N-terminus, the 401-residue chain is MASTTNGVNGHKASQPQSLIQTLNNIGADSFSNDGERIQAVLAAYALVSRLETPWEFVARTCMGQPALGAALKVAKDLKLYDKWHELGDGEMTCEQLSELVSCDSALLFRILRHLAANHVLEETSIGVFKPTKLSISFTVPVFGEWINHLYDATTPCFFKMPEFLAQNGYKNPVDPNNGVFQAAKGWKGDMFDYYKSHPVEGASFDHVMGGVMANQAGWLEIFPHNKLLETADAQSPLVVDVGGNIGHDIERFRQEHPETASRLYLEDLPEVVKRSKCPDDVNKVGYDFFTPQPIKGARAYYMHGVLHDWSEEPARKILEMQKEAMKPGYSTLLIHDHIAPESLAHPHTTAYDLTMMVMVAGVERREAHWRALLKSAGYKLVRIWRSPLAVQGVIEAELDQ.

S-adenosyl-L-methionine-binding positions include 243–244 (GG) and Asp-268. His-308 functions as the Proton acceptor in the catalytic mechanism.

It belongs to the class I-like SAM-binding methyltransferase superfamily. Cation-independent O-methyltransferase family. COMT subfamily.

Its pathway is secondary metabolite biosynthesis; terpenoid biosynthesis. Its function is as follows. O-methyltransferase; part of the gene cluster that mediates the biosynthesis of the phthalide-terpenoid hybrid 11'-O-desmethylfendlerol. Within the pathway, mfmE catalyzes the 7-O-methylation of the phthalide 5,7-dihydroxy-4-(hydroxymethyl)-6-methylphthalide to yield 5-hydroxy-4-(hydroxymethyl)-7-methoxy-6-methylphthalide. The biosynthesis of 11'-O-desmethylfendlerol begins with the NR-PKS mfmB that forms 3,5-dimethylorsellinic acid (DMOA), which is then transformed into the phthalide 5,7-dihydroxy-4-(hydroxymethyl)-6-methylphthalide by the cytochrome P450 monooxygenase mfmA and the hydrolase mfmC. Subsequently, the methyltransferase mfmE catalyzes 7-O-methylation to yield 5-hydroxy-4-(hydroxymethyl)-7-methoxy-6-methylphthalide, which undergoes C-3 hydroxylation by the cytochrome P450 monooxygenase mfmF. The resultant cyclopolic acid (2,5-dihydroxy-4-(hydroxymethyl)-7-methoxy-6-methylphthalide) is then farnesylated by the DMATS-type prenyltransferase mfmD to afford 5-O-farnesylcyclopolic acid. Finally, the Pyr4-family terpene cyclase mfmH cyclizes the farnesyl moiety of 5-O-farnesylcyclopolic acid into a drimane-like structure, thus completing the biosynthesis of 11'-O-desmethylfendlerol. The polypeptide is O-methyltransferase mfmE (Annulohypoxylon moriforme (Filamentous fungus)).